The chain runs to 327 residues: Porphobilinogen deaminase (327 aa).

Cys251 carries the post-translational modification S-(dipyrrolylmethanemethyl)cysteine.

It belongs to the HMBS family. Dipyrromethane is required as a cofactor.

It catalyses the reaction 4 porphobilinogen + H2O = hydroxymethylbilane + 4 NH4(+). Its pathway is porphyrin-containing compound metabolism; protoporphyrin-IX biosynthesis; coproporphyrinogen-III from 5-aminolevulinate: step 2/4. Tetrapolymerization of the monopyrrole PBG into the hydroxymethylbilane pre-uroporphyrinogen in several discrete steps. The polypeptide is Porphobilinogen deaminase (HEM3) (Kluyveromyces lactis (strain ATCC 8585 / CBS 2359 / DSM 70799 / NBRC 1267 / NRRL Y-1140 / WM37) (Yeast)).